The following is a 278-amino-acid chain: UPF0758 protein BURPS668_0979 (278 aa).

A disordered region spans residues 1-64 (MQYEIVSAGE…ATAAARRGRD (64 aa)). The segment covering 22–59 (AAAPAAPSSAVPSSAALSSAALSSAARPTGAPPATAAA) has biased composition (low complexity). The 123-residue stretch at 156–278 (LVDSPGAVDD…TFSFAQAGWI (123 aa)) folds into the MPN domain. 3 residues coordinate Zn(2+): H227, H229, and D240. Residues 227–240 (HNHPSGAVRPSAAD) carry the JAMM motif motif.

Belongs to the UPF0758 family.

The protein is UPF0758 protein BURPS668_0979 of Burkholderia pseudomallei (strain 668).